The primary structure comprises 948 residues: RNA polymerase-associated protein RapA (948 aa).

Residues 164 to 332 enclose the Helicase ATP-binding domain; the sequence is EVADRSAPRV…FARLRLLDPN (169 aa). 177 to 184 is a binding site for ATP; it reads DEVGLGKT. The DEAH box signature appears at 278–281; sequence DEAH. Residues 473-627 enclose the Helicase C-terminal domain; it reads RVDWLIDTLK…TCPTGNALQH (155 aa).

The protein belongs to the SNF2/RAD54 helicase family. RapA subfamily. In terms of assembly, interacts with the RNAP. Has a higher affinity for the core RNAP than for the holoenzyme. Its ATPase activity is stimulated by binding to RNAP.

Its function is as follows. Transcription regulator that activates transcription by stimulating RNA polymerase (RNAP) recycling in case of stress conditions such as supercoiled DNA or high salt concentrations. Probably acts by releasing the RNAP, when it is trapped or immobilized on tightly supercoiled DNA. Does not activate transcription on linear DNA. Probably not involved in DNA repair. The protein is RNA polymerase-associated protein RapA of Pseudomonas putida (strain ATCC 47054 / DSM 6125 / CFBP 8728 / NCIMB 11950 / KT2440).